Consider the following 469-residue polypeptide: Glutamate--tRNA ligase 2 (469 aa).

The 'HIGH' region signature appears at 8-18; the sequence is PSPTGFLHVGG. The short motif at 250 to 254 is the 'KMSKS' region element; it reads KLSKR. ATP is bound at residue Lys-253.

The protein belongs to the class-I aminoacyl-tRNA synthetase family. Glutamate--tRNA ligase type 1 subfamily. Monomer.

It localises to the cytoplasm. The catalysed reaction is tRNA(Glu) + L-glutamate + ATP = L-glutamyl-tRNA(Glu) + AMP + diphosphate. Its function is as follows. Catalyzes the attachment of glutamate to tRNA(Glu) in a two-step reaction: glutamate is first activated by ATP to form Glu-AMP and then transferred to the acceptor end of tRNA(Glu). The protein is Glutamate--tRNA ligase 2 of Thermotoga petrophila (strain ATCC BAA-488 / DSM 13995 / JCM 10881 / RKU-1).